A 604-amino-acid chain; its full sequence is 2-isopropylmalate synthase 2, mitochondrial (604 aa).

The transit peptide at 1–50 (MVKHSFIALAEHASKLRRSIPPVKLTYKNMLRDPSVKYRAFAPPKMVKRI) directs the protein to the mitochondrion. Residues 60 to 335 (PRWLSTDLRD…SPNLDFSDLT (276 aa)) form the Pyruvate carboxyltransferase domain. Positions 69, 274, 276, and 310 each coordinate a divalent metal cation.

It belongs to the alpha-IPM synthase/homocitrate synthase family. LeuA type 2 subfamily. As to quaternary structure, homodimer. A divalent metal cation serves as cofactor.

It is found in the mitochondrion. The enzyme catalyses 3-methyl-2-oxobutanoate + acetyl-CoA + H2O = (2S)-2-isopropylmalate + CoA + H(+). Its pathway is amino-acid biosynthesis; L-leucine biosynthesis; L-leucine from 3-methyl-2-oxobutanoate: step 1/4. Catalyzes the condensation of the acetyl group of acetyl-CoA with 3-methyl-2-oxobutanoate (2-oxoisovalerate) to form 3-carboxy-3-hydroxy-4-methylpentanoate (2-isopropylmalate). Redundant to LEU4, responsible for about 20% of alpha-IPMS activity. Involved in leucine synthesis. The protein is 2-isopropylmalate synthase 2, mitochondrial of Saccharomyces cerevisiae (strain ATCC 204508 / S288c) (Baker's yeast).